The primary structure comprises 327 residues: Lipoyl synthase (327 aa).

[4Fe-4S] cluster is bound by residues C66, C71, C77, C92, C96, C99, and S306. The region spanning 78-295 (FSKGTATFMI…EKEAYELGFS (218 aa)) is the Radical SAM core domain.

Belongs to the radical SAM superfamily. Lipoyl synthase family. Requires [4Fe-4S] cluster as cofactor.

The protein resides in the cytoplasm. The enzyme catalyses [[Fe-S] cluster scaffold protein carrying a second [4Fe-4S](2+) cluster] + N(6)-octanoyl-L-lysyl-[protein] + 2 oxidized [2Fe-2S]-[ferredoxin] + 2 S-adenosyl-L-methionine + 4 H(+) = [[Fe-S] cluster scaffold protein] + N(6)-[(R)-dihydrolipoyl]-L-lysyl-[protein] + 4 Fe(3+) + 2 hydrogen sulfide + 2 5'-deoxyadenosine + 2 L-methionine + 2 reduced [2Fe-2S]-[ferredoxin]. It participates in protein modification; protein lipoylation via endogenous pathway; protein N(6)-(lipoyl)lysine from octanoyl-[acyl-carrier-protein]: step 2/2. Its function is as follows. Catalyzes the radical-mediated insertion of two sulfur atoms into the C-6 and C-8 positions of the octanoyl moiety bound to the lipoyl domains of lipoate-dependent enzymes, thereby converting the octanoylated domains into lipoylated derivatives. The polypeptide is Lipoyl synthase (Neisseria meningitidis serogroup A / serotype 4A (strain DSM 15465 / Z2491)).